Consider the following 198-residue polypeptide: Fimbriae W protein (198 aa).

One can recognise an HTH luxR-type domain in the interval 127–192 (HYCTTRHFSV…QFLKYIRVNL (66 aa)).

It is found in the fimbrium. This Salmonella typhimurium (strain LT2 / SGSC1412 / ATCC 700720) protein is Fimbriae W protein (fimW).